The sequence spans 1064 residues: MMKFRFRRQGADPQREKLKQELFAFNKTVEHGFPNQPSALAFDPELRIMAIGTRSGAVKIYGAPGVEFTGLHRDAATVTQMHFLTGQGRLLSLLDDSSLHLWEIVHHNGCAHLEEALSFQLPSRPGFDGASAPLSLTRVTVVLLVAASDIAALGTEGSSVFFLDVTTLTLLEGQTLAPGEVLRSVPDDYRCGKALGPVESLQGHLRDPTKILIGYSRGLLVIWNQASQCVDHIFLGNQQLESLCWGRDSSTVVSSHSDGSYAVWSVDAGSFPTLQPTVATTPYGPFPCKAINKILWRNCESGGHFIIFSGGMPRASYGDRHCVSVLRAETLVTLDFTSRIIDFFTVHSTRPEDEFDDPQALAVLLEEELVVLDLQTPGWPAVPAPYLAPLHSSAITCSAHVASVPAKLWARIVSAGEQQSPQPVSSALSWPITGGRNLAQEPSQRGLLLTGHEDGTVRFWDASGVALRPLYKLSTAGLFQTDCEHADSLAQAAEDDWPPFRKVGCFDPYSDDPRLGVQKVALCKYTAQMVVAGTAGQVLVLELSDVPVEQAVSVAIIDLLQDREGFTWKGHERLSPRTGPLPWPAGFQPRVLVQCLPPAAVTAVTLHTEWSLVAFGTSHGFGLFDYQRKSPVLARCTLHPNDSLAMEGPLSRVKSLKKSLRQSFRRIRKSRVSGKKRAANASSKLQEANAQLAEQACPHDVEMTPVQRRIEPRSADDSLSGVVRCLYFADTFLRDGAHHGPTMWAGTNSGSVFAYALEVPAAAVGGEKRPEQAVEAVLGKEVQLMHRAPVVAIAVLDGRGRPLPEPYEASRDLAQAPDMQGGHAVLIASEEQFKVFTLPKVSAKTKFKLTAHEGCRVRKVALATFASVACEDYAETCLACLTNLGDVHVFSVPGLRPQVHYSCIRKEDISGIASCVFTRHGQGFYLISPSEFERFSLSARNITEPLCSLDINWPRDATQASYRIRESPKLSQANGTPSILLAPQSLDGSPDPAHSMGPDTPEPPEAALSPMSIDSATSADTTLDTTGDVTVEDVKDFLGSSEESEKNLRNLAEDEAHACAILIK.

14 WD repeats span residues 38–71 (SALAFDPELRIMAIGTRSGAVKIYGAPGVEFTGL), 78–119 (VTQM…ALSF), 139–176 (VTVVLLVAASDIAALGTEGSSVFFLDVTTLTLLEGQTL), 200–234 (SLQGHLRDPTKILIGYSRGLLVIWNQASQCVDHIF), 240–272 (LESLCWGRDSSTVVSSHSDGSYAVWSVDAGSFP), 290–332 (AINK…ETLV), 340–374 (IIDFFTVHSTRPEDEFDDPQALAVLLEEELVVLDL), 396–474 (TCSA…YKLS), 518–593 (QKVA…RVLV), 602–663 (TAVT…LRQS), 723–783 (VRCL…KEVQ), 792–844 (AIAV…VSAK), 849–902 (LTAH…VHYS), and 916–939 (VFTRHGQGFYLISPSEFERFSLSA). Residue S663 is modified to Phosphoserine. A Phosphothreonine modification is found at T958. A disordered region spans residues 966–1010 (ESPKLSQANGTPSILLAPQSLDGSPDPAHSMGPDTPEPPEAALSP). Phosphoserine occurs at positions 967 and 985.

This sequence belongs to the WD repeat L(2)GL family. Associated with nonmuscle myosin II heavy chain. Interacts with PRKCI/aPKC, PARD6B/Par-6 and PARD6A. Interacts with STX4A. Interacts with RAB10 (GDP-bound form); the interaction is direct and promotes RAB10 association with membranes and activation through competition with the Rab inhibitor GDI1. Interacts with DCAF1. Post-translationally, phosphorylated at least at Ser-663 by PRKCI. Expressed in brain, kidney, and muscle but is barely seen in heart and placenta. Down-regulated or lost in all cell lines and in most of the tumor samples analyzed. Loss was associated with advanced stage of the disease.

The protein resides in the early endosome membrane. It is found in the golgi apparatus. It localises to the trans-Golgi network membrane. Its subcellular location is the golgi apparatus membrane. The protein localises to the cell projection. The protein resides in the axon. It is found in the cytoplasm. It localises to the cytoskeleton. Functionally, cortical cytoskeleton protein found in a complex involved in maintaining cell polarity and epithelial integrity. Involved in the regulation of mitotic spindle orientation, proliferation, differentiation and tissue organization of neuroepithelial cells. Involved in axonogenesis through RAB10 activation thereby regulating vesicular membrane trafficking toward the axonal plasma membrane. This is Lethal(2) giant larvae protein homolog 1 (LLGL1) from Homo sapiens (Human).